The following is a 357-amino-acid chain: GDP-polyphosphate phosphotransferase (357 aa).

The tract at residues 1-83 (MSEEPTVSPP…DSTSASLPAN (83 aa)) is disordered. Over residues 14–25 (QPAAQPAKPARP) the composition is skewed to low complexity. Positions 26 to 40 (AARRAPRKPATRRPR) are enriched in basic residues.

It belongs to the polyphosphate kinase 2 (PPK2) family. Class I subfamily. In terms of assembly, homotetramer. Also forms octamers. Mg(2+) serves as cofactor. It depends on Mn(2+) as a cofactor.

It catalyses the reaction [phosphate](n) + GTP = [phosphate](n+1) + GDP. The enzyme catalyses [phosphate](n) + ATP = [phosphate](n+1) + ADP. Its function is as follows. Uses inorganic polyphosphate (polyP) as a donor to convert GDP to GTP and ADP to ATP. Shows a preference for GDP. Can also catalyze the synthesis of polyP from GTP or ATP, but the rate of polyP utilization is 75-fold greater than the rate of polyP synthesis. The polypeptide is GDP-polyphosphate phosphotransferase (Pseudomonas aeruginosa (strain ATCC 15692 / DSM 22644 / CIP 104116 / JCM 14847 / LMG 12228 / 1C / PRS 101 / PAO1)).